A 331-amino-acid polypeptide reads, in one-letter code: Phosphoribosylformylglycinamidine cyclo-ligase (331 aa).

This sequence belongs to the AIR synthase family.

The protein localises to the cytoplasm. It carries out the reaction 2-formamido-N(1)-(5-O-phospho-beta-D-ribosyl)acetamidine + ATP = 5-amino-1-(5-phospho-beta-D-ribosyl)imidazole + ADP + phosphate + H(+). Its pathway is purine metabolism; IMP biosynthesis via de novo pathway; 5-amino-1-(5-phospho-D-ribosyl)imidazole from N(2)-formyl-N(1)-(5-phospho-D-ribosyl)glycinamide: step 2/2. The polypeptide is Phosphoribosylformylglycinamidine cyclo-ligase (Clostridium botulinum (strain ATCC 19397 / Type A)).